A 684-amino-acid polypeptide reads, in one-letter code: U4/U6 small nuclear ribonucleoprotein Prp3 (684 aa).

Residues 1–87 enclose the PWI domain; it reads MSLSKRELDE…HSKSNSDRNR (87 aa). Positions 73 to 107 are enriched in basic and acidic residues; sequence GRSSRHSKSNSDRNRKRELKDVFGDDSEVSKESSG. Disordered regions lie at residues 73–109 and 162–183; these read GRSSRHSKSNSDRNRKRELKDVFGDDSEVSKESSGVK and FISPPTPQPKISSSSQSERLPI. Residues 170-183 are compositionally biased toward polar residues; it reads PKISSSSQSERLPI.

In terms of assembly, component of the precatalytic spliceosome (spliceosome B complex). Component of the U4/U6-U5 tri-snRNP complex, a building block of the precatalytic spliceosome (spliceosome B complex). The U4/U6-U5 tri-snRNP complex is composed of the U4, U6 and U5 snRNAs and at least PRPF3, PRPF4, PRPF6, PRPF8, PRPF31, SNRNP200, TXNL4A, SNRNP40, SNRPB, SNRPD1, SNRPD2, SNRPD3, SNRPE, SNRPF, SNRPG, DDX23, CD2BP2, PPIH, SNU13, EFTUD2, SART1 and USP39, plus LSM2, LSM3, LSM4, LSM5, LSM6, LSM7 and LSM8.

It is found in the nucleus. The protein resides in the nucleus speckle. Its function is as follows. Plays a role in pre-mRNA splicing as component of the U4/U6-U5 tri-snRNP complex that is involved in spliceosome assembly, and as component of the precatalytic spliceosome (spliceosome B complex). This Gallus gallus (Chicken) protein is U4/U6 small nuclear ribonucleoprotein Prp3 (PRPF3).